Here is a 126-residue protein sequence, read N- to C-terminus: Major sperm protein 2 (126 aa).

Residue Ala2 is modified to N-acetylalanine. Residues 8 to 125 enclose the MSP domain; that stretch reads DIATMPNQKV…RRKNLPIEYN (118 aa).

Sperm.

The protein resides in the cell projection. It localises to the pseudopodium. It is found in the cytoplasm. The protein localises to the cytoskeleton. Its function is as follows. Central component in molecular interactions underlying sperm crawling. Forms an extensive filament system that extends from sperm villipoda, along the leading edge of the pseudopod. This is Major sperm protein 2 (MSP-2) from Globodera rostochiensis (Golden nematode worm).